A 118-amino-acid polypeptide reads, in one-letter code: Beta-2-microglobulin (118 aa).

Residues 1–20 (MAVSAALVLLGLLSLSGLDA) form the signal peptide. Positions 25–112 (PEVQVYSRHP…HVTLTQPKIV (88 aa)) constitute an Ig-like C1-type domain. A disulfide bridge links Cys45 with Cys99.

This sequence belongs to the beta-2-microglobulin family. Heterodimer of an alpha chain and a beta chain. Beta-2-microglobulin is the beta-chain of major histocompatibility complex class I molecules.

The protein localises to the secreted. Its function is as follows. Component of the class I major histocompatibility complex (MHC). Involved in the presentation of peptide antigens to the immune system. The chain is Beta-2-microglobulin (B2M) from Ovis aries (Sheep).